We begin with the raw amino-acid sequence, 135 residues long: Large ribosomal subunit protein eL27 (135 aa).

Belongs to the eukaryotic ribosomal protein eL27 family.

In Pisum sativum (Garden pea), this protein is Large ribosomal subunit protein eL27 (RPL27).